Here is a 261-residue protein sequence, read N- to C-terminus: MTLKARVIPCLDVKDGRVVKGVNFVDLIDAGDPVEAARAYDAAGADELCFLDITASSDNRETIFDVVARTAEQCFMPLTVGGGVRQVADIRKLLLAGADKVSINTAAVKNPEFVAEAADKFGNQCIVVAIDAKKVSGAGENDHWEIFTHGGRQPTGIDAVEFAQKVVDLGAGEILLTSMDRDGTKAGYDVALTRAVADSVRAPVIASGGVGTLDHLVAGIRDGHATAVLAASIFHFGTYTIGEAKRYMAEAGIPMRLDPVR.

Catalysis depends on residues Asp-12 and Asp-131.

It belongs to the HisA/HisF family. In terms of assembly, heterodimer of HisH and HisF.

It localises to the cytoplasm. The catalysed reaction is 5-[(5-phospho-1-deoxy-D-ribulos-1-ylimino)methylamino]-1-(5-phospho-beta-D-ribosyl)imidazole-4-carboxamide + L-glutamine = D-erythro-1-(imidazol-4-yl)glycerol 3-phosphate + 5-amino-1-(5-phospho-beta-D-ribosyl)imidazole-4-carboxamide + L-glutamate + H(+). It participates in amino-acid biosynthesis; L-histidine biosynthesis; L-histidine from 5-phospho-alpha-D-ribose 1-diphosphate: step 5/9. Its function is as follows. IGPS catalyzes the conversion of PRFAR and glutamine to IGP, AICAR and glutamate. The HisF subunit catalyzes the cyclization activity that produces IGP and AICAR from PRFAR using the ammonia provided by the HisH subunit. The protein is Imidazole glycerol phosphate synthase subunit HisF of Brucella melitensis biotype 2 (strain ATCC 23457).